The chain runs to 444 residues: Proline--tRNA ligase (444 aa).

The protein belongs to the class-II aminoacyl-tRNA synthetase family. ProS type 2 subfamily. As to quaternary structure, homodimer.

It localises to the cytoplasm. It carries out the reaction tRNA(Pro) + L-proline + ATP = L-prolyl-tRNA(Pro) + AMP + diphosphate. Its function is as follows. Catalyzes the attachment of proline to tRNA(Pro) in a two-step reaction: proline is first activated by ATP to form Pro-AMP and then transferred to the acceptor end of tRNA(Pro). The protein is Proline--tRNA ligase of Methylobacterium sp. (strain 4-46).